Consider the following 312-residue polypeptide: Tyrosine recombinase XerC (312 aa).

One can recognise a Core-binding (CB) domain in the interval 1–103; sequence MIASIYSFLD…SIKSFAHYCV (103 aa). The 183-residue stretch at 124-306 folds into the Tyr recombinase domain; sequence ELPSPMTYAQ…SVKLKKQTHQ (183 aa). Catalysis depends on residues arginine 164, lysine 188, histidine 258, arginine 261, and histidine 284. Residue tyrosine 293 is the O-(3'-phospho-DNA)-tyrosine intermediate of the active site.

The protein belongs to the 'phage' integrase family. XerC subfamily. Forms a cyclic heterotetrameric complex composed of two molecules of XerC and two molecules of XerD.

It is found in the cytoplasm. Functionally, site-specific tyrosine recombinase, which acts by catalyzing the cutting and rejoining of the recombining DNA molecules. The XerC-XerD complex is essential to convert dimers of the bacterial chromosome into monomers to permit their segregation at cell division. It also contributes to the segregational stability of plasmids. The chain is Tyrosine recombinase XerC from Chlamydia pneumoniae (Chlamydophila pneumoniae).